A 391-amino-acid polypeptide reads, in one-letter code: MSLNPRDVVIVDFGRTPMGRSKGGMHRNTRAETMSAHLISKLLERNPKVDPAEVEDVIWGCVNQTLEQGWNIARMASLMTQIPHTSAAQTVSRLCGSSMSALHTAAQAIQTGNGDVFVIGGVEHMGHVGMMHGVDPNPHLSLYAAKASGMMGLTAEMLGKMHGISREAQDKFGARSHQLAWKATQEGKFKDEIIPMEGYDENGFLKVFDFDETIRPETTVETLAELKPAFNPKGGTVTAGTSSQITDGASCMIVMSAQRAQDLGIQPMAVIRSMAVAGVDPAIMGYGPVPSTNKALKRAGLTIADIDFVELNEAFAAQALPVLKDLKLLDKMDEKVNLHGGAIALGHPFGCSGARISGTLLNVMKQNGGTLGVSTMCVGLGQGITTVFERI.

Residue C95 is the Acyl-thioester intermediate of the active site. Active-site proton acceptor residues include H347 and C377.

Belongs to the thiolase-like superfamily. Thiolase family. As to quaternary structure, heterotetramer of two alpha chains (FadB) and two beta chains (FadA).

It is found in the cytoplasm. It catalyses the reaction an acyl-CoA + acetyl-CoA = a 3-oxoacyl-CoA + CoA. It functions in the pathway lipid metabolism; fatty acid beta-oxidation. In terms of biological role, catalyzes the final step of fatty acid oxidation in which acetyl-CoA is released and the CoA ester of a fatty acid two carbons shorter is formed. This chain is 3-ketoacyl-CoA thiolase, found in Pseudomonas aeruginosa (strain ATCC 15692 / DSM 22644 / CIP 104116 / JCM 14847 / LMG 12228 / 1C / PRS 101 / PAO1).